The primary structure comprises 247 residues: LHFPL tetraspan subfamily member 4 protein (247 aa).

Helical transmembrane passes span 22 to 42, 97 to 117, 127 to 147, and 178 to 198; these read IGVL…VVFI, FFVL…ALFF, ICAW…MIFP, and ILAI…FVLG.

Belongs to the LHFP family. As to quaternary structure, interacts with GABA(A) receptor subunits. Interacts with GABRB3. Interacts with GABRA2. Interacts with GABRG2. Interacts with GABRA1. Identified in a complex of 720 kDa composed of LHFPL4, NLGN2, GABRA1, GABRB2, GABRG2 and GABRB3. Interacts with NLGN2; leading to mutual regulation of protein level and synaptic clustering. As to expression, highly expressed in the brain, including the cortex, hippocampus, midbrain, olfactory bulb pona plus medulla (at protein level). Expressed in the in the cerebellar granular layer and in granular layer. Colocalized with GPHN at inhibitory synapses. Weakly expressed in heart, testis, lung, intestine, vagina, ovary and uterus.

The protein localises to the cell projection. It localises to the dendrite. Its subcellular location is the postsynaptic cell membrane. Its function is as follows. Plays a role in the regulation of inhibitory synapse formation and function by being involved in maintening gamma-aminobutyric acid receptors (GABAARs) clustering and their associated scaffold proteins at inhibitory synaptic sites. Acts in concert with NLGN2 to recruit or stabilize GABAARs. This is LHFPL tetraspan subfamily member 4 protein from Mus musculus (Mouse).